The following is a 93-amino-acid chain: Signal recognition particle 19 kDa protein (93 aa).

This sequence belongs to the SRP19 family. In terms of assembly, part of the signal recognition particle protein translocation system, which is composed of SRP and FtsY. Archaeal SRP consists of a 7S RNA molecule of 300 nucleotides and two protein subunits: SRP54 and SRP19.

The protein resides in the cytoplasm. Its function is as follows. Involved in targeting and insertion of nascent membrane proteins into the cytoplasmic membrane. Binds directly to 7S RNA and mediates binding of the 54 kDa subunit of the SRP. This is Signal recognition particle 19 kDa protein from Haloquadratum walsbyi (strain DSM 16790 / HBSQ001).